Here is a 592-residue protein sequence, read N- to C-terminus: Aspartate--tRNA ligase (592 aa).

Glu171 contributes to the L-aspartate binding site. Positions 195–198 are aspartate; sequence QLFK. Arg217 serves as a coordination point for L-aspartate. Residues 217-219 and Gln226 each bind ATP; that span reads RDE. Residue His448 coordinates L-aspartate. An ATP-binding site is contributed by Glu482. Residue Arg489 coordinates L-aspartate. Residue 534–537 coordinates ATP; it reads GLDR.

The protein belongs to the class-II aminoacyl-tRNA synthetase family. Type 1 subfamily. As to quaternary structure, homodimer.

The protein resides in the cytoplasm. The enzyme catalyses tRNA(Asp) + L-aspartate + ATP = L-aspartyl-tRNA(Asp) + AMP + diphosphate. Functionally, catalyzes the attachment of L-aspartate to tRNA(Asp) in a two-step reaction: L-aspartate is first activated by ATP to form Asp-AMP and then transferred to the acceptor end of tRNA(Asp). The polypeptide is Aspartate--tRNA ligase (Pseudoalteromonas translucida (strain TAC 125)).